The sequence spans 664 residues: DNA ligase (664 aa).

NAD(+) is bound by residues 34–38 (DAEYD), 83–84 (SL), and Glu114. Lys116 (N6-AMP-lysine intermediate) is an active-site residue. 4 residues coordinate NAD(+): Arg137, Glu172, Lys288, and Lys312. Residues Cys406, Cys409, Cys424, and Cys429 each contribute to the Zn(2+) site. Residues 586-664 (VRDNRLEGLT…EEEFRQMVMS (79 aa)) form the BRCT domain.

This sequence belongs to the NAD-dependent DNA ligase family. LigA subfamily. Mg(2+) serves as cofactor. It depends on Mn(2+) as a cofactor.

The catalysed reaction is NAD(+) + (deoxyribonucleotide)n-3'-hydroxyl + 5'-phospho-(deoxyribonucleotide)m = (deoxyribonucleotide)n+m + AMP + beta-nicotinamide D-nucleotide.. DNA ligase that catalyzes the formation of phosphodiester linkages between 5'-phosphoryl and 3'-hydroxyl groups in double-stranded DNA using NAD as a coenzyme and as the energy source for the reaction. It is essential for DNA replication and repair of damaged DNA. The polypeptide is DNA ligase (Carboxydothermus hydrogenoformans (strain ATCC BAA-161 / DSM 6008 / Z-2901)).